We begin with the raw amino-acid sequence, 728 residues long: Propionyl-CoA carboxylase alpha chain, mitochondrial (728 aa).

The N-terminal 52 residues, 1–52 (MAGFWVGTAPLVAAGRRGRWPPQQLMLSAALRTLKHVLYYSRQCLMVSRNLG), are a transit peptide targeting the mitochondrion. Residues 62-509 (TFDKILVANR…STKFLSDVYP (448 aa)) enclose the Biotin carboxylation domain. Residue lysine 65 is modified to N6-acetyllysine; alternate. Position 65 is an N6-succinyllysine; alternate (lysine 65). Lysine 119 is subject to N6-succinyllysine. N6-acetyllysine; alternate is present on lysine 150. N6-succinyllysine; alternate is present on lysine 150. Lysine 177 contacts ATP. Positions 181 to 378 (KLLAKKAEVN…LVQEMIRVAK (198 aa)) constitute an ATP-grasp domain. N6-acetyllysine; alternate is present on lysine 200. Lysine 200 carries the post-translational modification N6-succinyllysine; alternate. Residues 209–270 (AREI…PRHI), glutamate 261, and asparagine 296 each bind ATP. A Phosphoserine modification is found at serine 252. Lysine 262 carries the N6-succinyllysine modification. The residue at position 328 (lysine 328) is an N6-acetyllysine; alternate. Lysine 328 is modified (N6-succinyllysine; alternate). Residues glutamate 336, glutamate 349, and asparagine 351 each coordinate Mg(2+). Mn(2+)-binding residues include glutamate 336, glutamate 349, and asparagine 351. Glutamate 349 is an active-site residue. Lysine 385 and lysine 407 each carry N6-succinyllysine. Phenylalanine 409 provides a ligand contact to biotin. N6-acetyllysine is present on lysine 496. 3 positions are modified to N6-succinyllysine: lysine 502, lysine 513, and lysine 648. In terms of domain architecture, Biotinyl-binding spans 653 to 728 (KVTEDTSSVL…GEGDLLVELE (76 aa)). Position 694 is an N6-biotinyllysine; by HLCS (lysine 694).

In terms of assembly, the holoenzyme is a dodecamer composed of 6 PCCA/alpha subunits and 6 PCCB/beta subunits. Interacts (via the biotin carboxylation domain) with SIRT4. Interacts with SIRT3 and SIRT5. Mg(2+) serves as cofactor. Mn(2+) is required as a cofactor. Requires biotin as cofactor. Acetylated. Post-translationally, the biotin cofactor is covalently attached to the C-terminal biotinyl-binding domain and is required for the catalytic activity. Biotinylation is catalyzed by HLCS.

It is found in the mitochondrion matrix. The enzyme catalyses propanoyl-CoA + hydrogencarbonate + ATP = (S)-methylmalonyl-CoA + ADP + phosphate + H(+). The catalysed reaction is butanoyl-CoA + hydrogencarbonate + ATP = (2S)-ethylmalonyl-CoA + ADP + phosphate + H(+). The protein operates within metabolic intermediate metabolism; propanoyl-CoA degradation; succinyl-CoA from propanoyl-CoA: step 1/3. This is one of the 2 subunits of the biotin-dependent propionyl-CoA carboxylase (PCC), a mitochondrial enzyme involved in the catabolism of odd chain fatty acids, branched-chain amino acids isoleucine, threonine, methionine, and valine and other metabolites. Propionyl-CoA carboxylase catalyzes the carboxylation of propionyl-CoA/propanoyl-CoA to D-methylmalonyl-CoA/(S)-methylmalonyl-CoA. Within the holoenzyme, the alpha subunit catalyzes the ATP-dependent carboxylation of the biotin carried by the biotin carboxyl carrier (BCC) domain, while the beta subunit then transfers the carboxyl group from carboxylated biotin to propionyl-CoA. Propionyl-CoA carboxylase also significantly acts on butyryl-CoA/butanoyl-CoA, which is converted to ethylmalonyl-CoA/(2S)-ethylmalonyl-CoA at a much lower rate. Other alternative minor substrates include (2E)-butenoyl-CoA/crotonoyl-CoA. The protein is Propionyl-CoA carboxylase alpha chain, mitochondrial of Homo sapiens (Human).